The chain runs to 1312 residues: AT-rich interactive domain-containing protein 4B (1312 aa).

Disordered regions lie at residues 124–166 and 266–306; these read PLTN…EDDR and KTEL…EPFP. Ser276, Ser295, and Ser296 each carry phosphoserine. Positions 277–305 are enriched in acidic residues; it reads EAEEEEEEEDDEKEKEDNSSEEEEEIEPF. The 93-residue stretch at 306 to 398 folds into the ARID domain; that stretch reads PEERENFLQQ…YLYGFEEYCR (93 aa). Residues Lys429, Lys440, and Lys462 each participate in a glycyl lysine isopeptide (Lys-Gly) (interchain with G-Cter in SUMO2) cross-link. Disordered stretches follow at residues 458–577, 635–680, 708–894, 909–1212, and 1252–1288; these read EIER…KVQV, IKHR…EMVS, QASE…TTGF, LNNS…NRLP, and SEVA…SITA. The segment at 465–473 is antigenic epitope; that stretch reads IKPSLGSKK. Ser483 is subject to Phosphoserine. The span at 483–496 shows a compositional bias: basic and acidic residues; the sequence is SDQEKEVNIKKPED. Lys517 is covalently cross-linked (Glycyl lysine isopeptide (Lys-Gly) (interchain with G-Cter in SUMO2)). Over residues 532–567 the composition is skewed to acidic residues; sequence NKEEDEDDEEAEEEEEEEEEEEDEDDDDNNEEEEFE. One can recognise a Tudor-knot domain in the interval 572 to 624; that stretch reads GMKVQVRYGRGKNQKMYEASIKDSDVEGGEVLYLVHYCGWNVRYDEWIKADKI. Residues 643–656 show a composition bias toward basic and acidic residues; it reads NKLDKEKDKDEKYS. 3 positions are modified to phosphoserine: Ser666, Ser675, and Ser717. 2 stretches are compositionally biased toward basic and acidic residues: residues 722–754 and 778–787; these read ERGA…KEEQ and SPERLRKDIE. Residues 728 to 754 are a coiled coil; the sequence is MDNNGKEESKIDHLTNNRNDLISKEEQ. A Glycyl lysine isopeptide (Lys-Gly) (interchain with G-Cter in SUMO2) cross-link involves residue Lys751. Residues Ser778 and Ser790 each carry the phosphoserine modification. Over residues 788–799 the composition is skewed to acidic residues; sequence VLSEDTDYEEDE. Residue Thr793 is modified to Phosphothreonine. Basic and acidic residues-rich tracts occupy residues 807–816, 828–852, 909–927, and 995–1010; these read VKKDTTDKSS, CNTE…KESL, LNNS…RKDV, and KPIE…RKAE. Residue Ser1014 is modified to Phosphoserine. Thr1026 carries the phosphothreonine modification. Residues 1028 to 1037 show a composition bias toward low complexity; that stretch reads ESPSSVTVTE. At Ser1029 the chain carries Phosphoserine. The span at 1038–1047 shows a compositional bias: polar residues; sequence GSRQQSSVTV. Residues 1056 to 1065 show a composition bias toward basic and acidic residues; sequence EEVRSIKSET. The segment covering 1087 to 1101 has biased composition (low complexity); it reads SSPAGFDASVSSSSS. The segment at 1130–1137 is antigenic epitope; sequence KKQKRSHK. A compositionally biased stretch (basic residues) spans 1130–1148; the sequence is KKQKRSHKATVVNNKKKGK. The residue at position 1150 (Thr1150) is a Phosphothreonine. Ser1152, Ser1153, Ser1155, and Ser1159 each carry phosphoserine. Residues 1162 to 1191 are compositionally biased toward polar residues; it reads ESITKSQPVKSVSTGMKSHSTKSPARTQSP. The span at 1196-1208 shows a compositional bias: basic and acidic residues; sequence KNGDKDPDLKEPS. Residues 1231 to 1270 are a coiled coil; it reads ERITILQEKLQEIRKHYLSLKSEVASIDRRRKRLKKKERE. The span at 1272–1288 shows a compositional bias: low complexity; it reads AATSSSSSSPSSSSITA.

Component of a Sin3A corepressor complex consisting of SIN3A, SAP130, SUDS3/SAP45, SAP180, HDAC1 and HDAC2. Interacts with ARID4A. Interacts with AR. As to expression, highly expressed in the testis and in breast, lung, colon, pancreatic and ovarian cancers. Expressed at low levels in the thymus, prostate and ovary.

The protein localises to the nucleus. It is found in the cytoplasm. Acts as a transcriptional repressor. May function in the assembly and/or enzymatic activity of the Sin3A corepressor complex or in mediating interactions between the complex and other regulatory complexes. Plays a role in the regulation of epigenetic modifications at the PWS/AS imprinting center near the SNRPN promoter, where it might function as part of a complex with RB1 and ARID4A. Involved in spermatogenesis, together with ARID4A, where it functions as a transcriptional coactivator for AR (androgen receptor) and enhances expression of genes required for sperm maturation. Regulates expression of the tight junction protein CLDN3 in the testis, which is important for integrity of the blood-testis barrier. Plays a role in myeloid homeostasis where it regulates the histone methylation state of bone marrow cells and expression of various genes involved in hematopoiesis. May function as a leukemia suppressor. The sequence is that of AT-rich interactive domain-containing protein 4B (ARID4B) from Homo sapiens (Human).